Reading from the N-terminus, the 59-residue chain is Large ribosomal subunit protein bL32 (59 aa).

The segment covering 1 to 15 has biased composition (basic residues); sequence MANPKRKQSKRRSAN. The disordered stretch occupies residues 1–48; that stretch reads MANPKRKQSKRRSANRRAANAFIAPEFAKDPTDGSAFRPHRVNPKNGM.

The protein belongs to the bacterial ribosomal protein bL32 family.

The chain is Large ribosomal subunit protein bL32 from Opitutus terrae (strain DSM 11246 / JCM 15787 / PB90-1).